Consider the following 208-residue polypeptide: Large ribosomal subunit protein uL3 (208 aa).

The residue at position 149 (glutamine 149) is an N5-methylglutamine.

This sequence belongs to the universal ribosomal protein uL3 family. As to quaternary structure, part of the 50S ribosomal subunit. Forms a cluster with proteins L14 and L19. Post-translationally, methylated by PrmB.

One of the primary rRNA binding proteins, it binds directly near the 3'-end of the 23S rRNA, where it nucleates assembly of the 50S subunit. The polypeptide is Large ribosomal subunit protein uL3 (Haemophilus influenzae (strain PittGG)).